We begin with the raw amino-acid sequence, 1262 residues long: Collagen alpha-1(III) chain (1262 aa).

Residues methionine 1 to alanine 23 form the signal peptide. The propeptide at glutamine 24–proline 150 is N-terminal propeptide. The 60-residue stretch at glycine 29–proline 88 folds into the VWFC domain. 2 disordered regions span residues threonine 95 to isoleucine 143 and glycine 160 to alanine 1000. The segment covering glycine 102 to alanine 118 has biased composition (low complexity). Over residues proline 119–proline 134 the composition is skewed to pro residues. Residues glycine 145–methionine 164 are nonhelical region (N-terminal). Residues glycine 165–cysteine 994 are triple-helical region. Pro residues predominate over residues proline 167–alanine 190. The segment covering proline 192 to proline 201 has biased composition (low complexity). The segment covering proline 202–proline 216 has biased composition (pro residues). Positions lysine 228–aspartate 240 are enriched in basic and acidic residues. Over residues proline 253 to alanine 264 the composition is skewed to low complexity. The residue at position 262 (lysine 262) is a 5-hydroxylysine. The span at arginine 265–lysine 274 shows a compositional bias: basic and acidic residues. Low complexity-rich tracts occupy residues aspartate 276–proline 295 and threonine 339–alanine 376. The residue at position 283 (lysine 283) is a 5-hydroxylysine. Gly residues predominate over residues glycine 389 to leucine 414. Composition is skewed to low complexity over residues methionine 534–lysine 549 and proline 631–glutamine 640. The span at glycine 641–glycine 650 shows a compositional bias: gly residues. The segment covering proline 672–proline 684 has biased composition (low complexity). Gly residues predominate over residues glycine 692–glycine 701. Composition is skewed to low complexity over residues leucine 723–proline 738, threonine 781–alanine 790, glutamine 802–asparagine 817, and proline 828–proline 838. 5-hydroxylysine is present on lysine 859. The span at glycine 863–glycine 872 shows a compositional bias: gly residues. A compositionally biased stretch (pro residues) spans proline 895–proline 904. The segment covering proline 927–arginine 940 has biased composition (low complexity). Pro residues predominate over residues alanine 976 to proline 993. The segment at cysteine 995–glycine 1003 is nonhelical region (C-terminal). Positions aspartate 1018–leucine 1262 are cleaved as a propeptide — C-terminal propeptide. Residues glycine 1028–leucine 1262 form the Fibrillar collagen NC1 domain. Disulfide bonds link cysteine 1058/cysteine 1090, cysteine 1098/cysteine 1260, and cysteine 1168/cysteine 1213. Ca(2+) contacts are provided by aspartate 1076, asparagine 1078, glutamine 1079, cysteine 1081, and aspartate 1084. Residue asparagine 1163 is glycosylated (N-linked (GlcNAc...) asparagine).

The protein belongs to the fibrillar collagen family. Trimers of identical alpha 1(III) chains. The chains are linked to each other by interchain disulfide bonds. Trimers are also cross-linked via hydroxylysines. In terms of processing, prolines at the third position of the tripeptide repeating unit (G-X-Y) are hydroxylated in some or all of the chains.

It localises to the secreted. The protein resides in the extracellular space. It is found in the extracellular matrix. Its function is as follows. Collagen type III occurs in most soft connective tissues along with type I collagen. This chain is Collagen alpha-1(III) chain (COL3A1), found in Gallus gallus (Chicken).